The chain runs to 384 residues: 23S rRNA (uracil(747)-C(5))-methyltransferase RlmC (384 aa).

[4Fe-4S] cluster contacts are provided by Cys-7, Cys-15, Cys-18, and Cys-94. S-adenosyl-L-methionine contacts are provided by Gln-219, Phe-248, Glu-269, and Asn-316. Cys-343 serves as the catalytic Nucleophile.

It belongs to the class I-like SAM-binding methyltransferase superfamily. RNA M5U methyltransferase family. RlmC subfamily.

The enzyme catalyses uridine(747) in 23S rRNA + S-adenosyl-L-methionine = 5-methyluridine(747) in 23S rRNA + S-adenosyl-L-homocysteine + H(+). Catalyzes the formation of 5-methyl-uridine at position 747 (m5U747) in 23S rRNA. This Shewanella sp. (strain MR-4) protein is 23S rRNA (uracil(747)-C(5))-methyltransferase RlmC.